The chain runs to 96 residues: uncharacterized protein (96 aa).

A run of 2 helical transmembrane segments spans residues 27 to 47 (LAFR…ALLI) and 50 to 70 (LSGV…SIVF).

It is found in the cell membrane. This is an uncharacterized protein from Haemophilus influenzae (strain ATCC 51907 / DSM 11121 / KW20 / Rd).